The primary structure comprises 880 residues: Valine--tRNA ligase (880 aa).

The 'HIGH' region motif lies at 46-56; that stretch reads PNVTGKLHLGH. The short motif at 520 to 524 is the 'KMSKS' region element; it reads KMSKS. Lys523 serves as a coordination point for ATP. Positions 808–880 form a coiled coil; the sequence is LAGLINIEEE…KARIAELKEN (73 aa).

This sequence belongs to the class-I aminoacyl-tRNA synthetase family. ValS type 1 subfamily. As to quaternary structure, monomer.

The protein localises to the cytoplasm. It catalyses the reaction tRNA(Val) + L-valine + ATP = L-valyl-tRNA(Val) + AMP + diphosphate. Functionally, catalyzes the attachment of valine to tRNA(Val). As ValRS can inadvertently accommodate and process structurally similar amino acids such as threonine, to avoid such errors, it has a 'posttransfer' editing activity that hydrolyzes mischarged Thr-tRNA(Val) in a tRNA-dependent manner. This Lactococcus lactis subsp. lactis (strain IL1403) (Streptococcus lactis) protein is Valine--tRNA ligase.